We begin with the raw amino-acid sequence, 767 residues long: U3 small nucleolar RNA-associated protein 14 homolog A (767 aa).

The segment at 23-49 is disordered; the sequence is TSNYPLSASEDEGDSDGERKHQKLLEA. Phosphoserine is present on residues Ser29, Ser31, Ser37, Ser52, Ser77, and Ser81. Lys122 participates in a covalent cross-link: Glycyl lysine isopeptide (Lys-Gly) (interchain with G-Cter in SUMO2). At Thr205 the chain carries Phosphothreonine. Residues 317 to 346 adopt a coiled-coil conformation; it reads LEARQAMQEQLAKNKELTQKLQVVSESEEE. The disordered stretch occupies residues 338-554; it reads QVVSESEEEG…SKGKNKKEQM (217 aa). Acidic residues predominate over residues 342–355; the sequence is ESEEEGGADEEEAL. A compositionally biased stretch (basic and acidic residues) spans 398–433; the sequence is AAHEFPENEENDKPVAEEDELLKELEKRRSLRKRSE. Arg431 bears the Citrulline mark. Lys447 participates in a covalent cross-link: Glycyl lysine isopeptide (Lys-Gly) (interchain with G-Cter in SUMO2). Ser451 is subject to Phosphoserine. A compositionally biased stretch (acidic residues) spans 486–498; sequence VWEEEPAPEEDEP. A compositionally biased stretch (basic and acidic residues) spans 503–538; the sequence is RPERMRTLEELEELGKEDSLPNKERPRPSVEGEQVR. Lys518 participates in a covalent cross-link: Glycyl lysine isopeptide (Lys-Gly) (interchain with G-Cter in SUMO2). At Arg586 the chain carries Citrulline. The disordered stretch occupies residues 730 to 767; it reads TAEDVDCRSSPRSDVPVMQSNPKQHSKHQKQRKKSSIG. Over residues 753–767 the composition is skewed to basic residues; that stretch reads QHSKHQKQRKKSSIG.

It belongs to the UTP14 family. Interacts with DHX37. Post-translationally, citrullinated by PADI4. As to expression, ubiquitously expressed.

It is found in the nucleus. The protein localises to the nucleolus. May be required for ribosome biogenesis. The chain is U3 small nucleolar RNA-associated protein 14 homolog A (Utp14a) from Mus musculus (Mouse).